Reading from the N-terminus, the 210-residue chain is FMN-dependent NADH:quinone oxidoreductase (210 aa).

FMN is bound by residues Ser9 and 15-17; that span reads SHS.

It belongs to the azoreductase type 1 family. Homodimer. Requires FMN as cofactor.

It catalyses the reaction 2 a quinone + NADH + H(+) = 2 a 1,4-benzosemiquinone + NAD(+). The catalysed reaction is N,N-dimethyl-1,4-phenylenediamine + anthranilate + 2 NAD(+) = 2-(4-dimethylaminophenyl)diazenylbenzoate + 2 NADH + 2 H(+). Its function is as follows. Quinone reductase that provides resistance to thiol-specific stress caused by electrophilic quinones. Functionally, also exhibits azoreductase activity. Catalyzes the reductive cleavage of the azo bond in aromatic azo compounds to the corresponding amines. The chain is FMN-dependent NADH:quinone oxidoreductase from Mesorhizobium japonicum (strain LMG 29417 / CECT 9101 / MAFF 303099) (Mesorhizobium loti (strain MAFF 303099)).